Consider the following 288-residue polypeptide: MKLPIFIADAFTARAFRGNPAAVCLLENELDEDMHQKIAREMNLSETAFIRKLHPTDNFAQSSCFGLRWFTPASEVPLCGHATLASAAVLFHKIKNMNSTLTFVTLSGELRARRAEDGIVLDLPLYPAHPQDFHEVEDLIKTAIGNTLVQDICYSPDTQKLLVRLSDVYNRSFLENLKVNTENLLQVENTGKVKGLILTLKGEPGGQTQAFDFYSRYFAPWVGVAEDPVTGSAHAVLSSYWSQHLGKKEMHAFQCSHRGGELGISLRPDGRVDIRGGAAVVLEGTLTA.

Glutamate 46 is a catalytic residue.

It belongs to the PhzF family. Interacts with UNRIP/MAWD.

This Homo sapiens (Human) protein is Phenazine biosynthesis-like domain-containing protein (PBLD).